The sequence spans 126 residues: uncharacterized protein (126 aa).

This is an uncharacterized protein from Homo sapiens (Human).